A 122-amino-acid polypeptide reads, in one-letter code: Ferredoxin (122 aa).

The disordered stretch occupies residues 1–33 (MSHDRRLTVGSLLPNQPRPVAVPKAPSVVQPSK). Residues 8-14 (TVGSLLP) form a targeting peptide region. The 83-residue stretch at 40–122 (AIIRLEQNGR…FRLACQANME (83 aa)) folds into the 2Fe-2S ferredoxin-type domain. [2Fe-2S] cluster-binding residues include cysteine 75, cysteine 80, cysteine 83, and cysteine 117.

The protein belongs to the 2Fe2S plant-type ferredoxin family. It depends on [2Fe-2S] cluster as a cofactor.

The protein localises to the encapsulin nanocompartment. Its function is as follows. Cargo protein of a type 1 encapsulin nanocompartment. An iron-binding protein probably involved in iron mineralization in the encapsulin nanocompartment. 2 different cargo proteins have been identified (IMEF and Fer); when both are expressed in E.coli with the shell protein only IMEF is detected within the nanocompartment. E.coli expressing all 3 genes stores the largest amount of iron and is protected from Fe/H2O2-induced oxidative stress. This chain is Ferredoxin, found in Bacillus thermotolerans (Quasibacillus thermotolerans).